We begin with the raw amino-acid sequence, 439 residues long: Trigger factor (439 aa).

A PPIase FKBP-type domain is found at glycine 163–proline 248.

This sequence belongs to the FKBP-type PPIase family. Tig subfamily.

Its subcellular location is the cytoplasm. It carries out the reaction [protein]-peptidylproline (omega=180) = [protein]-peptidylproline (omega=0). Functionally, involved in protein export. Acts as a chaperone by maintaining the newly synthesized protein in an open conformation. Functions as a peptidyl-prolyl cis-trans isomerase. This chain is Trigger factor, found in Nitrosomonas europaea (strain ATCC 19718 / CIP 103999 / KCTC 2705 / NBRC 14298).